Consider the following 341-residue polypeptide: Glyceraldehyde-3-phosphate dehydrogenase 2 (341 aa).

Residues 12–13, R78, and T120 each bind NAD(+); that span reads RI. D-glyceraldehyde 3-phosphate-binding positions include 152 to 154 and T183; that span reads SCT. C153 acts as the Nucleophile in catalysis. N184 is an NAD(+) binding site. D-glyceraldehyde 3-phosphate is bound by residues R198, 211-212, and R234; that span reads TG. Residue N313 participates in NAD(+) binding.

This sequence belongs to the glyceraldehyde-3-phosphate dehydrogenase family. Homotetramer.

It is found in the cytoplasm. It carries out the reaction D-glyceraldehyde 3-phosphate + phosphate + NAD(+) = (2R)-3-phospho-glyceroyl phosphate + NADH + H(+). It functions in the pathway carbohydrate degradation; glycolysis; pyruvate from D-glyceraldehyde 3-phosphate: step 1/5. Its function is as follows. Catalyzes the oxidative phosphorylation of glyceraldehyde 3-phosphate (G3P) to 1,3-bisphosphoglycerate (BPG) using the cofactor NAD. The first reaction step involves the formation of a hemiacetal intermediate between G3P and a cysteine residue, and this hemiacetal intermediate is then oxidized to a thioester, with concomitant reduction of NAD to NADH. The reduced NADH is then exchanged with the second NAD, and the thioester is attacked by a nucleophilic inorganic phosphate to produce BPG. The polypeptide is Glyceraldehyde-3-phosphate dehydrogenase 2 (gapA2) (Staphylococcus epidermidis (strain ATCC 35984 / DSM 28319 / BCRC 17069 / CCUG 31568 / BM 3577 / RP62A)).